The sequence spans 471 residues: Putative ETHYLENE INSENSITIVE 3-like 4 protein (471 aa).

Residues 280-316 form a disordered region; sequence DLKISEDQDDQESSGSKRKSESMEPSKSVYTCQNSSC. Residues 304–316 show a composition bias toward polar residues; that stretch reads PSKSVYTCQNSSC.

It belongs to the EIN3 family.

It localises to the nucleus. Its function is as follows. Putative transcription factor that may be involved in the ethylene response pathway. In Arabidopsis thaliana (Mouse-ear cress), this protein is Putative ETHYLENE INSENSITIVE 3-like 4 protein (EIL4).